Consider the following 374-residue polypeptide: Calcium/calmodulin-dependent protein kinase type 1 (374 aa).

The Protein kinase domain maps to 20-276; that stretch reads YDFRDVLGTG…CEQALQHPWI (257 aa). ATP is bound by residues 26–34 and lysine 49; that span reads LGTGAFSEV. Residue lysine 59 forms a Glycyl lysine isopeptide (Lys-Gly) (interchain with G-Cter in ubiquitin) linkage. The Proton acceptor role is filled by aspartate 141. Threonine 177 carries the phosphothreonine; by CaMKK1 and CaMKK2 modification. The tract at residues 276–316 is autoinhibitory domain; that stretch reads IAGDTALDKNIHQSVSEQIKKNFAKSKWKQAFNATAVVRHM. The segment at 296–317 is calmodulin-binding; it reads KNFAKSKWKQAFNATAVVRHMR. Residues 315–321 carry the Nuclear export signal motif; it reads HMRKLQL.

This sequence belongs to the protein kinase superfamily. CAMK Ser/Thr protein kinase family. CaMK subfamily. Monomer. Interacts with XPO1. In terms of processing, phosphorylated by CaMKK1 and CaMKK2 on Thr-177. Post-translationally, polybiquitinated by the E3 ubiquitin-protein ligase complex SCF(FBXL12), leading to proteasomal degradation. As to expression, ubiquitous.

It localises to the cytoplasm. Its subcellular location is the nucleus. The enzyme catalyses L-seryl-[protein] + ATP = O-phospho-L-seryl-[protein] + ADP + H(+). It carries out the reaction L-threonyl-[protein] + ATP = O-phospho-L-threonyl-[protein] + ADP + H(+). With respect to regulation, activated by Ca(2+)/calmodulin. Binding of calmodulin results in conformational change that relieves intrasteric autoinhibition and allows phosphorylation of Thr-177 within the activation loop by CaMKK1 or CaMKK2. Phosphorylation of Thr-177 results in several fold increase in total activity. Unlike CaMK4, is unable to exhibit autonomous activity after Ca(2+)/calmodulin activation. In terms of biological role, calcium/calmodulin-dependent protein kinase that operates in the calcium-triggered CaMKK-CaMK1 signaling cascade and, upon calcium influx, regulates transcription activators activity, cell cycle, hormone production, cell differentiation, actin filament organization and neurite outgrowth. Recognizes the substrate consensus sequence [MVLIF]-x-R-x(2)-[ST]-x(3)-[MVLIF]. Regulates axonal extension and growth cone motility in hippocampal and cerebellar nerve cells. Upon NMDA receptor-mediated Ca(2+) elevation, promotes dendritic growth in hippocampal neurons and is essential in synapses for full long-term potentiation (LTP) and ERK2-dependent translational activation. Downstream of NMDA receptors, promotes the formation of spines and synapses in hippocampal neurons by phosphorylating ARHGEF7/BETAPIX on 'Ser-673', which results in the enhancement of ARHGEF7 activity and activation of RAC1. Promotes neuronal differentiation and neurite outgrowth by activation and phosphorylation of MARK2 on 'Ser-91', 'Ser-92', 'Ser-93' and 'Ser-294'. Promotes nuclear export of HDAC5 and binding to 14-3-3 by phosphorylation of 'Ser-259' and 'Ser-498' in the regulation of muscle cell differentiation. Regulates NUMB-mediated endocytosis by phosphorylation of NUMB on 'Ser-276' and 'Ser-295'. Involved in the regulation of basal and estrogen-stimulated migration of medulloblastoma cells through ARHGEF7/BETAPIX phosphorylation. Is required for proper activation of cyclin-D1/CDK4 complex during G1 progression in diploid fibroblasts. Plays a role in K(+) and ANG2-mediated regulation of the aldosterone synthase (CYP11B2) to produce aldosterone in the adrenal cortex. Phosphorylates EIF4G3/eIF4GII. In vitro phosphorylates CREB1, ATF1, CFTR, MYL9 and SYN1/synapsin I. The sequence is that of Calcium/calmodulin-dependent protein kinase type 1 (Camk1) from Mus musculus (Mouse).